Reading from the N-terminus, the 93-residue chain is Alpha-defensin 24 (93 aa).

Positions 1–19 (MKTLILLSALVLLAFQVQA) are cleaved as a signal peptide. Positions 20–58 (DPIQNTDEETKTEEQPGEEDQAVSVSFGDPEGASLQEES) are excised as a propeptide. The segment at 23 to 54 (QNTDEETKTEEQPGEEDQAVSVSFGDPEGASL) is disordered. Intrachain disulfides connect cysteine 64–cysteine 92, cysteine 66–cysteine 81, and cysteine 71–cysteine 91.

The protein belongs to the alpha-defensin family.

It is found in the secreted. May have microbicidal activities. The chain is Alpha-defensin 24 (Defa24) from Mus musculus (Mouse).